We begin with the raw amino-acid sequence, 379 residues long: Dihydroorotate dehydrogenase (quinone) (379 aa).

FMN contacts are provided by residues 79–83 (AGCDK) and Ala103. Lys83 lines the substrate pocket. Residue 128–131 (NRLG) participates in substrate binding. Residues Asn160 and Asn193 each coordinate FMN. Asn193 serves as a coordination point for substrate. Catalysis depends on Ser196, which acts as the Nucleophile. Asn198 serves as a coordination point for substrate. FMN-binding residues include Lys231 and Thr259. 260 to 261 (NT) serves as a coordination point for substrate. Residues Gly289, Gly318, and 339-340 (YT) contribute to the FMN site.

Belongs to the dihydroorotate dehydrogenase family. Type 2 subfamily. Monomer. FMN serves as cofactor.

Its subcellular location is the cell membrane. The enzyme catalyses (S)-dihydroorotate + a quinone = orotate + a quinol. The protein operates within pyrimidine metabolism; UMP biosynthesis via de novo pathway; orotate from (S)-dihydroorotate (quinone route): step 1/1. Its function is as follows. Catalyzes the conversion of dihydroorotate to orotate with quinone as electron acceptor. This chain is Dihydroorotate dehydrogenase (quinone), found in Crocosphaera subtropica (strain ATCC 51142 / BH68) (Cyanothece sp. (strain ATCC 51142)).